The primary structure comprises 560 residues: Formate--tetrahydrofolate ligase (560 aa).

69-76 (TPAGEGKS) serves as a coordination point for ATP.

The protein belongs to the formate--tetrahydrofolate ligase family.

It carries out the reaction (6S)-5,6,7,8-tetrahydrofolate + formate + ATP = (6R)-10-formyltetrahydrofolate + ADP + phosphate. Its pathway is one-carbon metabolism; tetrahydrofolate interconversion. The protein is Formate--tetrahydrofolate ligase of Bacillus pumilus (strain SAFR-032).